A 40-amino-acid polypeptide reads, in one-letter code: Photosystem II reaction center protein J (40 aa).

A helical transmembrane segment spans residues 8–28; it reads IPLWIIGTVTGILVIGLIGIF.

It belongs to the PsbJ family. In terms of assembly, PSII is composed of 1 copy each of membrane proteins PsbA, PsbB, PsbC, PsbD, PsbE, PsbF, PsbH, PsbI, PsbJ, PsbK, PsbL, PsbM, PsbT, PsbX, PsbY, PsbZ, Psb30/Ycf12, at least 3 peripheral proteins of the oxygen-evolving complex and a large number of cofactors. It forms dimeric complexes.

The protein resides in the plastid. The protein localises to the chloroplast thylakoid membrane. Functionally, one of the components of the core complex of photosystem II (PSII). PSII is a light-driven water:plastoquinone oxidoreductase that uses light energy to abstract electrons from H(2)O, generating O(2) and a proton gradient subsequently used for ATP formation. It consists of a core antenna complex that captures photons, and an electron transfer chain that converts photonic excitation into a charge separation. The sequence is that of Photosystem II reaction center protein J from Eucalyptus globulus subsp. globulus (Tasmanian blue gum).